Here is a 143-residue protein sequence, read N- to C-terminus: MLIGEYKHVVDNKGRVTLPSKFREELGEKFILTKGLDNCLFGYSLKEWAVLEEKLKKLPLTSKDARAFLRFFFAGACECEVDKQGRILIPQNLREYANLQKEVFIIGVMTRIEIWSEENWQREMADESLSVEKIAQKMEELGI.

SpoVT-AbrB domains lie at 5 to 47 and 76 to 119; these read EYKH…SLKE and ACEC…SEEN.

Belongs to the MraZ family. In terms of assembly, forms oligomers.

It is found in the cytoplasm. It localises to the nucleoid. The chain is Transcriptional regulator MraZ from Caldicellulosiruptor saccharolyticus (strain ATCC 43494 / DSM 8903 / Tp8T 6331).